We begin with the raw amino-acid sequence, 563 residues long: Dihydroxy-acid dehydratase (563 aa).

Cysteine 51 serves as a coordination point for [2Fe-2S] cluster. Mg(2+) is bound at residue aspartate 83. A [2Fe-2S] cluster-binding site is contributed by cysteine 124. Aspartate 125 and lysine 126 together coordinate Mg(2+). An N6-carboxylysine modification is found at lysine 126. Residue cysteine 196 participates in [2Fe-2S] cluster binding. Mg(2+) is bound at residue glutamate 448. Serine 474 serves as the catalytic Proton acceptor.

This sequence belongs to the IlvD/Edd family. Homodimer. [2Fe-2S] cluster is required as a cofactor. It depends on Mg(2+) as a cofactor.

It carries out the reaction (2R)-2,3-dihydroxy-3-methylbutanoate = 3-methyl-2-oxobutanoate + H2O. It catalyses the reaction (2R,3R)-2,3-dihydroxy-3-methylpentanoate = (S)-3-methyl-2-oxopentanoate + H2O. It participates in amino-acid biosynthesis; L-isoleucine biosynthesis; L-isoleucine from 2-oxobutanoate: step 3/4. Its pathway is amino-acid biosynthesis; L-valine biosynthesis; L-valine from pyruvate: step 3/4. Functions in the biosynthesis of branched-chain amino acids. Catalyzes the dehydration of (2R,3R)-2,3-dihydroxy-3-methylpentanoate (2,3-dihydroxy-3-methylvalerate) into 2-oxo-3-methylpentanoate (2-oxo-3-methylvalerate) and of (2R)-2,3-dihydroxy-3-methylbutanoate (2,3-dihydroxyisovalerate) into 2-oxo-3-methylbutanoate (2-oxoisovalerate), the penultimate precursor to L-isoleucine and L-valine, respectively. The polypeptide is Dihydroxy-acid dehydratase (Polynucleobacter necessarius subsp. necessarius (strain STIR1)).